Consider the following 826-residue polypeptide: MAAGKFASLPRNMPVNHQFPLASSMDLLSSKSPLVERRADAYQDVSIHGTLPRKKKGPPPIRSCDNFSHVGTLPHSRSPRHHSPLIQDVIQEQPLQDWKGEAFTFRDQHLLDPTLEYVKFSKERHVMDRTPERLKKELEEELLLSSEDLRSHAWYHGRIPRQVSENLMQRDGDFLVRDSLSSPGDFVLTCQWKNLPQHFKIRRTVVRLSEAYSRVQYQFEMESFDSIPGLVRCYVGNRRPISQQSGAIIFQPVNRTVPLRCLEERYGASSPDRAHEGSLTEGRPDAAKRLSLTVGGTQAREQGLPRGNLLRNKEKSGSQPACLDHMQDRRALSLKAHQSESYLPIGGKLTPQSPSVGTSPCPNSPVFRTGSEPTLSPAVVRRVSSDARPGEALRGSDSQLCPKPPPKPCKAPLLKAPPSPSIWLNSEANYCELNPALAASYDGASRLPFCAQDSYVELLTAKQNGGLGTRNSDTSYLILDDDDRTRPWKPPPAPGDTVGEDQDTFVMPLLETTSSFKPNDFESKLLPPENKPLETSMLKRAKELFTNSDPKVIAQHLLSVDCKVARILEVSEEMRKNMGVNSGLELITLPYGHQLRLDIIERHNTMAIGIAVDILGCTGSLEDRAATLNKIIQVAVELKDSMGDLYSFSAIMKALEMPQITRLEKTWTALRHQYTQTAILYEKQLKPFSKVLHEGRESTCVPPNNVSVPLLMPLVTLMEREAVTFEGTDMWEKNDESCEIMLNHLATARLMAEAADSYRMNAERILAGFQPDEEMSEVFKTEFQMRLLWGSKGAQVNQTERYEKFNQILTALSRKLEPPPVKQMEF.

At Ala2 the chain carries N-acetylalanine. Residues Ser32, Ser78, Ser83, and Ser182 each carry the phosphoserine modification. Residues 46 to 81 are disordered; it reads SIHGTLPRKKKGPPPIRSCDNFSHVGTLPHSRSPRH. Residues 154–253 form the SH2 domain; the sequence is WYHGRIPRQV…QSGAIIFQPV (100 aa). The segment at 268 to 287 is disordered; that stretch reads ASSPDRAHEGSLTEGRPDAA. Ser291 is modified (phosphoserine). The tract at residues 294–321 is disordered; sequence VGGTQAREQGLPRGNLLRNKEKSGSQPA. Residue Lys335 is modified to N6-methyllysine. The tract at residues 348 to 406 is disordered; it reads KLTPQSPSVGTSPCPNSPVFRTGSEPTLSPAVVRRVSSDARPGEALRGSDSQLCPKPPP. Over residues 350–361 the composition is skewed to polar residues; sequence TPQSPSVGTSPC. Residues Ser359, Ser364, Ser376, and Ser472 each carry the phosphoserine modification. Residues 480–501 form a disordered region; sequence DDDDRTRPWKPPPAPGDTVGED. The Ras-GEF domain occupies 549-819; sequence DPKVIAQHLL…TALSRKLEPP (271 aa). The segment at 745 to 749 is mediates the interaction with BCAR1/p130CAS; that stretch reads LATAR.

In terms of assembly, part of a complex comprised of PTPRA, BCAR1, BCAR3 (via SH2 domain) and SRC; the formation of the complex is dependent on integrin mediated-tyrosine phosphorylation of PTPRA. Within the complex, interacts (via SH2 domain) with PTPRA (when phosphorylated on 'Tyr-797'). Interacts (via Ras-GEF domain) with BCAR1. Interacts (via Ras-GEF domain) with NEDD9. Interacts with PTK2/FAK1. Interacts with PTPN1. Interacts (via SH2 domain) with EGFR (when tyrosine-phosphorylated). Post-translationally, phosphorylated on tyrosine residues.

The protein resides in the cytoplasm. It localises to the cell junction. Its subcellular location is the focal adhesion. Its function is as follows. Acts as an adapter protein downstream of several growth factor receptors to promote cell proliferation, migration, and redistribution of actin fibers. Specifically involved in INS/insulin signaling pathway by mediating MAPK1/ERK2-MAPK3/ERK1 activation and DNA synthesis. Promotes insulin-mediated membrane ruffling. In response to vasoconstrictor peptide EDN1, involved in the activation of RAP1 downstream of PTK2B via interaction with phosphorylated BCAR1. Inhibits cell migration and invasion via regulation of TGFB-mediated matrix digestion, actin filament rearrangement, and inhibition of invadopodia activity. May inhibit TGFB-SMAD signaling, via facilitating BCAR1 and SMAD2 and/or SMAD3 interaction. Regulates EGF-induced DNA synthesis. Required for the maintenance of ocular lens morphology and structural integrity, potentially via regulation of focal adhesion complex signaling. Acts upstream of PTPRA to regulate the localization of BCAR1 and PTPRA to focal adhesions, via regulation of SRC-mediated phosphorylation of PTPRA. Positively regulates integrin-induced tyrosine phosphorylation of BCAR1. Acts as a guanine nucleotide exchange factor (GEF) for small GTPases RALA, RAP1A and RRAS. However, in a contrasting study, lacks GEF activity towards RAP1. The polypeptide is Breast cancer anti-estrogen resistance protein 3 homolog (BCAR3) (Bos taurus (Bovine)).